Consider the following 364-residue polypeptide: UDP-N-acetylglucosamine--N-acetylmuramyl-(pentapeptide) pyrophosphoryl-undecaprenol N-acetylglucosamine transferase (364 aa).

UDP-N-acetyl-alpha-D-glucosamine is bound by residues 16–18 (TGG), N128, R166, S195, I249, and Q294.

Belongs to the glycosyltransferase 28 family. MurG subfamily.

The protein resides in the cell inner membrane. The enzyme catalyses di-trans,octa-cis-undecaprenyl diphospho-N-acetyl-alpha-D-muramoyl-L-alanyl-D-glutamyl-meso-2,6-diaminopimeloyl-D-alanyl-D-alanine + UDP-N-acetyl-alpha-D-glucosamine = di-trans,octa-cis-undecaprenyl diphospho-[N-acetyl-alpha-D-glucosaminyl-(1-&gt;4)]-N-acetyl-alpha-D-muramoyl-L-alanyl-D-glutamyl-meso-2,6-diaminopimeloyl-D-alanyl-D-alanine + UDP + H(+). It functions in the pathway cell wall biogenesis; peptidoglycan biosynthesis. Its function is as follows. Cell wall formation. Catalyzes the transfer of a GlcNAc subunit on undecaprenyl-pyrophosphoryl-MurNAc-pentapeptide (lipid intermediate I) to form undecaprenyl-pyrophosphoryl-MurNAc-(pentapeptide)GlcNAc (lipid intermediate II). In Chromohalobacter salexigens (strain ATCC BAA-138 / DSM 3043 / CIP 106854 / NCIMB 13768 / 1H11), this protein is UDP-N-acetylglucosamine--N-acetylmuramyl-(pentapeptide) pyrophosphoryl-undecaprenol N-acetylglucosamine transferase.